The chain runs to 490 residues: Aspartyl aminopeptidase 4 (490 aa).

His-97 contacts Zn(2+). Residue His-173 coordinates substrate. Zn(2+) is bound by residues Asp-273, Glu-308, Glu-309, and Asp-362. Residue Glu-308 coordinates substrate. Substrate is bound by residues Asp-362, His-365, Lys-390, and Tyr-397. Position 456 (His-456) interacts with Zn(2+).

This sequence belongs to the peptidase M18 family. In terms of assembly, tetrahedron-shaped homododecamer built from six homodimers. Zn(2+) serves as cofactor.

It localises to the cytoplasm. The protein resides in the vacuole lumen. The catalysed reaction is Release of an N-terminal aspartate or glutamate from a peptide, with a preference for aspartate.. With respect to regulation, the metalloproteases inhibitors EDTA and 1.10-phenanthroline both inhibit the activity, whereas bestatin, an inhibitor of most aminopeptidases, does not affect enzyme activity. Aspartyl aminopeptidase that contributes to peptide degradation both in the cytosol and the vacuole. Cells may respond to environmental conditions by changing the distributions of the cytosolic enzyme to the vacuole when cells need more active vacuolar degradation. The polypeptide is Aspartyl aminopeptidase 4 (APE4) (Saccharomyces cerevisiae (strain ATCC 204508 / S288c) (Baker's yeast)).